Here is a 368-residue protein sequence, read N- to C-terminus: Glutaminyl-peptide cyclotransferase (368 aa).

Positions 1-23 (MAGERRDSKAAAFFCLAWALCLA) are cleaved as a signal peptide. The N-linked (GlcNAc...) asparagine glycan is linked to Asn53. An intrachain disulfide couples Cys143 to Cys169. Residue Asp164 coordinates Zn(2+). Glu207 serves as the catalytic Proton acceptor. Glu208 lines the Zn(2+) pocket. The Proton acceptor role is filled by Asp254. A glycan (N-linked (GlcNAc...) asparagine) is linked at Asn292. A Zn(2+)-binding site is contributed by His336. Asn352 is a glycosylation site (N-linked (GlcNAc...) asparagine).

This sequence belongs to the glutaminyl-peptide cyclotransferase family. In terms of tissue distribution, expressed by the venom gland.

Its subcellular location is the secreted. The catalysed reaction is N-terminal L-glutaminyl-[peptide] = N-terminal 5-oxo-L-prolyl-[peptide] + NH4(+). Responsible for the biosynthesis of pyroglutamyl peptides. Has a bias against acidic and tryptophan residues adjacent to the N-terminal glutaminyl residue and a lack of importance of chain length after the second residue. Also catalyzes N-terminal pyroglutamate formation. This chain is Glutaminyl-peptide cyclotransferase (QPCT), found in Boiga dendrophila (Mangrove snake).